The chain runs to 491 residues: NADH-ubiquinone oxidoreductase chain 2 (491 aa).

The next 14 membrane-spanning stretches (helical) occupy residues M11–I31, V38–I58, E74–F94, I106–E126, N129–L149, L161–I181, I210–L230, G238–I258, A270–I290, L298–A318, V330–F350, G375–F395, V411–K433, and I463–V483.

The protein belongs to the complex I subunit 2 family.

It is found in the mitochondrion inner membrane. It carries out the reaction a ubiquinone + NADH + 5 H(+)(in) = a ubiquinol + NAD(+) + 4 H(+)(out). Core subunit of the mitochondrial membrane respiratory chain NADH dehydrogenase (Complex I) that is believed to belong to the minimal assembly required for catalysis. Complex I functions in the transfer of electrons from NADH to the respiratory chain. The immediate electron acceptor for the enzyme is believed to be ubiquinone. The protein is NADH-ubiquinone oxidoreductase chain 2 (nad2) of Dictyostelium citrinum (Slime mold).